A 426-amino-acid chain; its full sequence is D-cysteine desulfhydrase 1, mitochondrial (426 aa).

The N-terminal 63 residues, 1–63 (MARGAHQAPG…IGSFLSKRPY (63 aa)), are a transit peptide targeting the mitochondrion. Lysine 119 bears the N6-(pyridoxal phosphate)lysine mark. Catalysis depends on serine 146, which acts as the Nucleophile.

The protein belongs to the ACC deaminase/D-cysteine desulfhydrase family. Homodimer. The cofactor is pyridoxal 5'-phosphate. Present in seeds (at protein level).

It localises to the mitochondrion. The enzyme catalyses D-cysteine + H2O = hydrogen sulfide + pyruvate + NH4(+) + H(+). Inhibited by L-cysteine (L-cys). Catalyzes the production of hydrogen sulfide (H2S) from D-cysteine (D-cys). In Oryza sativa subsp. japonica (Rice), this protein is D-cysteine desulfhydrase 1, mitochondrial.